The sequence spans 451 residues: UPF0210 protein CLL_A1718 (451 aa).

Belongs to the UPF0210 family. As to quaternary structure, homodimer.

The protein is UPF0210 protein CLL_A1718 of Clostridium botulinum (strain Eklund 17B / Type B).